The primary structure comprises 112 residues: Signal recognition particle 19 kDa protein (112 aa).

This sequence belongs to the SRP19 family. Part of the signal recognition particle protein translocation system, which is composed of SRP and FtsY. Archaeal SRP consists of a 7S RNA molecule of 300 nucleotides and two protein subunits: SRP54 and SRP19.

Its subcellular location is the cytoplasm. Functionally, involved in targeting and insertion of nascent membrane proteins into the cytoplasmic membrane. Binds directly to 7S RNA and mediates binding of the 54 kDa subunit of the SRP. This Aeropyrum pernix (strain ATCC 700893 / DSM 11879 / JCM 9820 / NBRC 100138 / K1) protein is Signal recognition particle 19 kDa protein.